Consider the following 320-residue polypeptide: Malate dehydrogenase (320 aa).

NAD(+) is bound by residues 10 to 15 and Asp34; that span reads GSGMIG. Positions 83 and 89 each coordinate substrate. Residues Asn96 and 119 to 121 contribute to the NAD(+) site; that span reads ITN. 2 residues coordinate substrate: Asn121 and Arg152. The Proton acceptor role is filled by His176.

This sequence belongs to the LDH/MDH superfamily. MDH type 3 family.

The enzyme catalyses (S)-malate + NAD(+) = oxaloacetate + NADH + H(+). Catalyzes the reversible oxidation of malate to oxaloacetate. This is Malate dehydrogenase from Bartonella quintana (strain Toulouse) (Rochalimaea quintana).